The sequence spans 180 residues: ATP-dependent protease subunit HslV (180 aa).

Threonine 8 is an active-site residue. Na(+)-binding residues include glycine 165, cysteine 168, and threonine 171.

This sequence belongs to the peptidase T1B family. HslV subfamily. As to quaternary structure, a double ring-shaped homohexamer of HslV is capped on each side by a ring-shaped HslU homohexamer. The assembly of the HslU/HslV complex is dependent on binding of ATP.

Its subcellular location is the cytoplasm. The catalysed reaction is ATP-dependent cleavage of peptide bonds with broad specificity.. With respect to regulation, allosterically activated by HslU binding. In terms of biological role, protease subunit of a proteasome-like degradation complex believed to be a general protein degrading machinery. This chain is ATP-dependent protease subunit HslV, found in Halalkalibacterium halodurans (strain ATCC BAA-125 / DSM 18197 / FERM 7344 / JCM 9153 / C-125) (Bacillus halodurans).